The following is a 103-amino-acid chain: Large ribosomal subunit protein bL21 (103 aa).

Belongs to the bacterial ribosomal protein bL21 family. In terms of assembly, part of the 50S ribosomal subunit. Contacts protein L20.

Its function is as follows. This protein binds to 23S rRNA in the presence of protein L20. This chain is Large ribosomal subunit protein bL21, found in Shewanella baltica (strain OS223).